Here is a 234-residue protein sequence, read N- to C-terminus: Leucyl/phenylalanyl-tRNA--protein transferase (234 aa).

This sequence belongs to the L/F-transferase family.

Its subcellular location is the cytoplasm. It catalyses the reaction N-terminal L-lysyl-[protein] + L-leucyl-tRNA(Leu) = N-terminal L-leucyl-L-lysyl-[protein] + tRNA(Leu) + H(+). The enzyme catalyses N-terminal L-arginyl-[protein] + L-leucyl-tRNA(Leu) = N-terminal L-leucyl-L-arginyl-[protein] + tRNA(Leu) + H(+). It carries out the reaction L-phenylalanyl-tRNA(Phe) + an N-terminal L-alpha-aminoacyl-[protein] = an N-terminal L-phenylalanyl-L-alpha-aminoacyl-[protein] + tRNA(Phe). Functionally, functions in the N-end rule pathway of protein degradation where it conjugates Leu, Phe and, less efficiently, Met from aminoacyl-tRNAs to the N-termini of proteins containing an N-terminal arginine or lysine. This is Leucyl/phenylalanyl-tRNA--protein transferase from Tolumonas auensis (strain DSM 9187 / NBRC 110442 / TA 4).